Reading from the N-terminus, the 271-residue chain is Tryptophan synthase alpha chain (271 aa).

Residues Glu56 and Asp67 each act as proton acceptor in the active site.

Belongs to the TrpA family. As to quaternary structure, tetramer of two alpha and two beta chains.

The catalysed reaction is (1S,2R)-1-C-(indol-3-yl)glycerol 3-phosphate + L-serine = D-glyceraldehyde 3-phosphate + L-tryptophan + H2O. It participates in amino-acid biosynthesis; L-tryptophan biosynthesis; L-tryptophan from chorismate: step 5/5. Functionally, the alpha subunit is responsible for the aldol cleavage of indoleglycerol phosphate to indole and glyceraldehyde 3-phosphate. In Mycobacterium intracellulare, this protein is Tryptophan synthase alpha chain.